We begin with the raw amino-acid sequence, 365 residues long: Flagellar P-ring protein (365 aa).

Positions 1 to 21 are cleaved as a signal peptide; the sequence is MIKRIISIVFLLLTLPQLALA.

This sequence belongs to the FlgI family. In terms of assembly, the basal body constitutes a major portion of the flagellar organelle and consists of four rings (L,P,S, and M) mounted on a central rod.

Its subcellular location is the periplasm. It localises to the bacterial flagellum basal body. Assembles around the rod to form the L-ring and probably protects the motor/basal body from shearing forces during rotation. The polypeptide is Flagellar P-ring protein (Geobacter metallireducens (strain ATCC 53774 / DSM 7210 / GS-15)).